The primary structure comprises 841 residues: MAAAATAAASPVEGLTGGGGGGGGGVDGLFVELWRACAGPLVTVPAVGERVFYLPQGHIEQVEASTNQVAEQQGAPLYNLPWKIPCKVMNVELKAEPDTDEVYAQLTLLPEKQQDGNGSGNGNVSKDKVEEEEVVPPAATERPRVHSFCKTLTASDTSTHGGFSVLRRHADECLPPLDMSQHPPTQELVAKDLHGVEWRFRHIFRGQPRRHLLQSGWSVFVSAKRLVAGDAFIFLRGENGELRVGVRRAMRQQANIPSSVISSHSMHLGVLATAWHAVNTGTMFTVYYKPRTSPSEFVVPRDLYKESLKRNHSIGMRFKMTFEGEEAAEQRFTGTIVGVGDSDPSGWADSKWRSLKVRWDEAASVPRPDRVSPWQIEPANSPSPVNPLPAPRTKRARPNVLASSPDLSAVNKEVASKVMANSQQNGLPRAFHSQENMNLRSRFGDSNELNTSQKLTMWSSGSNQEKNNVSVQRELGSQSWMQMRRPDGSSEILSGFQPLKDTRNPLSSFPSQISGNRSNTWNTINVHYPDQNANHNMYPGTWSLMPPNTGFGVNQQNYLMTPDITLPQRSLNAKFGGNGAFTSLRAHGIDQRSSGWLGHIEPSSHIDDASSSLIKPQPLVIDHNVQKAKGSSCMLFGISLDSPAKPELLISPPSVAFDGKLQQDALEEDECSDPSKTVKPLDGAQHDSAREKHQSCPDGTKNIQSKQQNGSSRSCKKVHKQGIALGRSIDLTKFTCYDELIAELDQMFDFNGELNSSSKNWMVVYTDNEGDMMLVGDDPWNEFCNMVHKIFIYTREEVQKMNPGALNSRSEDSRSTSVERGLVGEGLQGGLSTPSLNSENC.

The disordered stretch occupies residues 109 to 140; sequence LPEKQQDGNGSGNGNVSKDKVEEEEVVPPAAT. The TF-B3 DNA-binding region spans 148-250; that stretch reads FCKTLTASDT…ELRVGVRRAM (103 aa). 3 disordered regions span residues 366–397, 663–715, and 804–841; these read PRPDRVSPWQIEPANSPSPVNPLPAPRTKRAR, QDAL…SRSC, and GALNSRSEDSRSTSVERGLVGEGLQGGLSTPSLNSENC. The segment covering 684–695 has biased composition (basic and acidic residues); that stretch reads AQHDSAREKHQS. Polar residues-rich tracts occupy residues 701–713 and 830–841; these read KNIQSKQQNGSSR and GLSTPSLNSENC. Positions 713-797 constitute a PB1 domain; sequence RSCKKVHKQG…HKIFIYTREE (85 aa).

The protein belongs to the ARF family. As to quaternary structure, homodimers and heterodimers. As to expression, expressed in roots, culms, leaves and young panicles.

It is found in the nucleus. Its function is as follows. Auxin response factors (ARFs) are transcriptional factors that bind specifically to the DNA sequence 5'-TGTCTC-3' found in the auxin-responsive promoter elements (AuxREs). This chain is Auxin response factor 24 (ARF24), found in Oryza sativa subsp. japonica (Rice).